The primary structure comprises 405 residues: Tyrosine--tRNA ligase (405 aa).

The 'HIGH' region signature appears at 41–50; the sequence is PTAPDLHLGH. The 'KMSKS' region signature appears at 225 to 229; sequence KMSKS. Lys228 is an ATP binding site. An S4 RNA-binding domain is found at 342 to 404; it reads EPLLVWVLSK…GKKGKFLKII (63 aa).

This sequence belongs to the class-I aminoacyl-tRNA synthetase family. TyrS type 2 subfamily. As to quaternary structure, homodimer.

It localises to the cytoplasm. It carries out the reaction tRNA(Tyr) + L-tyrosine + ATP = L-tyrosyl-tRNA(Tyr) + AMP + diphosphate + H(+). Its function is as follows. Catalyzes the attachment of tyrosine to tRNA(Tyr) in a two-step reaction: tyrosine is first activated by ATP to form Tyr-AMP and then transferred to the acceptor end of tRNA(Tyr). This chain is Tyrosine--tRNA ligase, found in Leptospira interrogans serogroup Icterohaemorrhagiae serovar Lai (strain 56601).